The chain runs to 261 residues: 7beta-hydroxysteroid dehydrogenase (261 aa).

NADP(+) is bound by residues 17–21 (TEGIG), 40–41 (RR), and 66–67 (DL). The active-site Proton acceptor is the Tyr-156.

Belongs to the short-chain dehydrogenases/reductases (SDR) family. As to quaternary structure, homodimer.

It carries out the reaction a 7beta-hydroxysteroid + NADP(+) = a 7-oxosteroid + NADPH + H(+). The enzyme catalyses ursocholate + NADP(+) = 3alpha,12alpha-dihydroxy-7-oxo-5beta-cholanate + NADPH + H(+). The catalysed reaction is 7-oxolithocholate + NADPH + H(+) = ursodeoxycholate + NADP(+). It catalyses the reaction 3alpha,7beta-dihydroxy-12-oxo-5beta-cholan-24-oate + NADP(+) = 7,12-dioxo-lithocholate + NADPH + H(+). It carries out the reaction 7beta-hydroxy-3,12-dioxo-5beta-cholan-24-oate + NADP(+) = dehydrocholate + NADPH + H(+). 7beta-hydroxysteroid dehydrogenase that catalyzes the reduction of the 7-oxo group of 7-oxosteroids, such as 3alpha,12alpha-dihydroxy-7-oxo-5beta-cholanate, 7-oxolithocholate, 7,12-dioxo-lithocholate and dehydrocholate, to the corresponding 7beta-hydroxysteroids. Is also able to catalyze the reverse oxidation reactions. Together with 7alpha-HSDH encoded in the adjacent gene, is likely involved in the epimerization of the hydroxy group at C-7 of primary bile acids through 7-keto bile acid intermediates. The protein is 7beta-hydroxysteroid dehydrogenase of Clostridium sardiniense (Clostridium absonum).